Reading from the N-terminus, the 235-residue chain is MRSPRTLEVWKLGTVNYLKSLKLQEKLVSERKAHQIPDTLLSLQHPPTYTLGKRRTDHNLLIPESELTKIGAELHYTQRGGDITFHGPHQAILYPIISLRSIGFGARNYVETLERSMIEFASIYGVKARAGNKCETGVWVGDRKIGAIGVRISSGITSHGLALNIDPDMKYFEHIVPCGIADKEVTSLRRETDTLLPSEEVIHEQLVSCLAKAFSYDDVVWKEDPSLILDTQDKE.

A mitochondrion-targeting transit peptide spans methionine 1 to lysine 32. Residues histidine 34–aspartate 218 enclose the BPL/LPL catalytic domain. Substrate-binding positions include arginine 79–histidine 86, alanine 147–glycine 149, and glycine 160–alanine 162. Cysteine 178 serves as the catalytic Acyl-thioester intermediate.

Belongs to the LipB family. As to expression, expressed in leaves. Expressed in roots, rosette leaves, cauline leaves, stems and siliques.

The protein resides in the mitochondrion. The enzyme catalyses octanoyl-[ACP] + L-lysyl-[protein] = N(6)-octanoyl-L-lysyl-[protein] + holo-[ACP] + H(+). Its pathway is protein modification; protein lipoylation via endogenous pathway; protein N(6)-(lipoyl)lysine from octanoyl-[acyl-carrier-protein]: step 1/2. In terms of biological role, catalyzes the transfer of endogenously produced octanoic acid from octanoyl-acyl-carrier-protein onto the lipoyl domains of lipoate-dependent enzymes. Lipoyl-ACP can also act as a substrate although octanoyl-ACP is likely to be the physiological substrate. Together with LIP1 is essential for mitochondrial protein lipoylation during seed development. Required for the lipoylation of mitochondrial 2-oxoglutarate dehydrogenase component E2 proteins in leaves and roots. The polypeptide is Octanoyltransferase LIP2, mitochondrial (Arabidopsis thaliana (Mouse-ear cress)).